Reading from the N-terminus, the 114-residue chain is Amphinase-1 (114 aa).

The active-site Proton acceptor is the His-15. 4 disulfide bridges follow: Cys-26–Cys-79, Cys-41–Cys-85, Cys-59–Cys-100, and Cys-97–Cys-114. Asn-27 carries N-linked (GlcNAc...) asparagine glycosylation. 42 to 46 contributes to the substrate binding site; sequence KPVNT. Asn-67 and Asn-91 each carry an N-linked (GlcNAc...) asparagine glycan. Catalysis depends on His-107, which acts as the Proton donor.

This sequence belongs to the pancreatic ribonuclease family. In terms of assembly, monomer. In terms of processing, there are at least five different forms arising from glycan heterogeneity.

The protein localises to the secreted. Endonuclease, hydrolyzes highly polymerized RNA, poly(U) and poly(C), and the dinucleotides CpA and UpA. More active towards rCA than rUA or rUG. Has cytotoxic activity against cultured human submaxillary gland carcinoma cells. In Lithobates pipiens (Northern leopard frog), this protein is Amphinase-1.